Here is a 454-residue protein sequence, read N- to C-terminus: MGRTETGDESSARKMRRKVPTSIESLDADILCIIFSFLDLFDLVHCTVVCNSWNAVIKRLKLLQASCRKMHHLGSDSPSSSTSLDRPAEIDVEDFAMKHHKMALLRGRIEIERWEAHSHRVSQCRMKKGLLLTGVGDKVMRLWSLKSYKCMEEYSLPDASSLIDFDFDESKKLEVVSLAWEYFDSVVVVVVEIVGLVGTRISIWRRNGQRSIFPSRAGTFPKGLCMRYIDPEAVVGCEDGTARVFDMYSKTCSQIIRTQGGPITCLSLSDNQLFLSGSSLGRVTVSDPLMDQPVATLKSTITAGGIQTICFNQGTNLAFIGTTGGYVSCWDLRKMDRLWEKRVSPNVVYSIQQLRNDTSVMVAGGIDGVLRMIDQKSGRVLSRVIMDDKFSTTSTRNNQVVIEKRRGKRVSQDMEIDKIERKVRPQISCIAMGMKKMVTAHNGKCISVWKFNLS.

The F-box domain maps to 20 to 66 (PTSIESLDADILCIIFSFLDLFDLVHCTVVCNSWNAVIKRLKLLQAS). WD repeat units lie at residues 85-116 (DRPA…RWEA), 117-153 (HSHR…CMEE), 170-214 (SKKL…SIFP), 215-255 (SRAG…CSQI), 258-296 (TQGG…PVAT), 301-340 (ITAG…RLWE), 343-383 (VSPN…VLSR), and 422-454 (KVRP…FNLS).

The chain is F-box/WD-40 repeat-containing protein At3g52030 from Arabidopsis thaliana (Mouse-ear cress).